Reading from the N-terminus, the 148-residue chain is Snaclec convulxin subunit beta (148 aa).

A signal peptide spans 1-23 (MGRFIFVSFGLLVVFLSLSGSEA). Cystine bridges form between Cys27/Cys38, Cys55/Cys144, and Cys121/Cys136. The C-type lectin domain maps to 34–148 (YDRYCYKVFK…TYSFVCKFEA (115 aa)).

Belongs to the snaclec family. Tetramer of heterodimers of alpha and beta subunits (alphabeta)(4); disulfide-linked. As to expression, expressed by the venom gland.

It localises to the secreted. Functionally, snake venom lectin that activates platelets by binding to the platelet collagen receptor glycoprotein VI (GP6). The indirect activation of integrin alpha-IIb/beta-3 (ITGA2B/ITGB3) also induced by the toxin is upstream the cytoskeletal translocation of GPIb, FcRgamma (FCER1G) and 14-3-3zeta (YWHAZ). This Crotalus durissus terrificus (South American rattlesnake) protein is Snaclec convulxin subunit beta.